The chain runs to 416 residues: MVTRHRVTVLYNAPEDIGNHMRQNDTHLTVRGGSGVVLQQRWLLERTGSLDKSFTRITWRPRADLARSLSVIENELSAGFSVYSNSSDVPERFITNPVYNSFHSEKFDIEQYLPPEVDLNLSWNPEDFTYDISVEPTQIQIVEYRLLKQGEEFTIARVKDEKLEVGVFFVDASDESDVDIGGIRCNWRMDDGKMERCQKTSLLYKQGHIAYNHSTTTTSLYLNEPIGLHPKIMIDLTDFEERPKCMYLMHLQLPLELFIDKFQSSPLLLFGEDDLELPEYSLRDKAWGSESIFELKAGTMNEVTLHTRYIEPSNNKGDKLEVSFDPEVILACDTGDNKVSRNPFYKKGLGYESLFTDDTTFRHLNSTTLLVPIPRPDTKDYSKIKNGTLLCLLISIIYIFSKVFGNNKKKRSVKRE.

The Lumenal segment spans residues 1 to 385 (MVTRHRVTVL…PDTKDYSKIK (385 aa)). N-linked (GlcNAc...) asparagine glycans are attached at residues N24, N85, N120, N212, and N365. Residues 386-405 (NGTLLCLLISIIYIFSKVFG) form a helical; Signal-anchor for type III membrane protein membrane-spanning segment. The Cytoplasmic segment spans residues 406 to 416 (NNKKKRSVKRE).

The protein belongs to the PIGX family. N-glycosylated.

Its subcellular location is the endoplasmic reticulum membrane. Its pathway is glycolipid biosynthesis; glycosylphosphatidylinositol-anchor biosynthesis. Functionally, required for proper folding and/or the stability of a subset of proteins in the endoplasmic reticulum. Aids the autocatalytic processing of PRB1. Component of glycosylphosphatidylinositol-mannosyltransferase 1 which transfers the first of the 4 mannoses in the GPI-anchor precursors during GPI-anchor biosynthesis. Probably acts by stabilizing the mannosyltransferase GPI14. The protein is Protein PBN1 (PBN1) of Saccharomyces cerevisiae (strain ATCC 204508 / S288c) (Baker's yeast).